Consider the following 148-residue polypeptide: Large ribosomal subunit protein uL15 (148 aa).

The segment covering 1 to 30 (MPSRLRKTRKLRGHVSHGHGRIGKHRKHPG) has biased composition (basic residues). The tract at residues 1 to 38 (MPSRLRKTRKLRGHVSHGHGRIGKHRKHPGGRGNAGGL) is disordered. Residue His-39 is modified to (3S)-3-hydroxyhistidine. Residues Lys-47 and Lys-55 each carry the N6-acetyllysine modification. A Phosphoserine modification is found at Ser-68. Lys-110 bears the N6-acetyllysine mark.

Belongs to the universal ribosomal protein uL15 family. In terms of assembly, component of the large ribosomal subunit. In terms of processing, hydroxylated on His-39 by MINA.

The protein localises to the cytoplasm. Component of the large ribosomal subunit. The ribosome is a large ribonucleoprotein complex responsible for the synthesis of proteins in the cell. This Homo sapiens (Human) protein is Large ribosomal subunit protein uL15 (RPL27A).